The following is a 277-amino-acid chain: Undecaprenyl-diphosphatase (277 aa).

Transmembrane regions (helical) follow at residues Leu53–Gly73, Val85–Ile105, Trp108–Trp128, Ala183–Ser203, Gly215–Val235, and Phe250–Val270.

This sequence belongs to the UppP family.

It localises to the cell inner membrane. The catalysed reaction is di-trans,octa-cis-undecaprenyl diphosphate + H2O = di-trans,octa-cis-undecaprenyl phosphate + phosphate + H(+). In terms of biological role, catalyzes the dephosphorylation of undecaprenyl diphosphate (UPP). Confers resistance to bacitracin. This Azotobacter vinelandii (strain DJ / ATCC BAA-1303) protein is Undecaprenyl-diphosphatase.